The chain runs to 258 residues: 4-oxalmesaconate hydratase (258 aa).

Residues H28, D31, and H141 each contribute to the Zn(2+) site.

This sequence belongs to the MshB deacetylase family. Requires Zn(2+) as cofactor.

The catalysed reaction is 2-hydroxy-4-oxobutane-1,2,4-tricarboxylate = 4-carboxy-2-hydroxy-cis,cis-muconate + H2O. Its function is as follows. Catalyzes the conversion of oxalomesaconic acid enol (OMAenol) to 4-carboxy-4-hydroxy-2-oxoadipic acid (CHA). Mediates the third step of gallate degradation pathway. The polypeptide is 4-oxalmesaconate hydratase (galB) (Pseudomonas putida (strain ATCC 47054 / DSM 6125 / CFBP 8728 / NCIMB 11950 / KT2440)).